We begin with the raw amino-acid sequence, 117 residues long: Conotoxin vil14a (117 aa).

An N-terminal signal peptide occupies residues 1–22; it reads MGFRVLVLVVMATTSALPFTFS. Positions 23–90 are excised as a propeptide; it reads EEPGRSPFRP…FAETPVGQKR (68 aa). The interval 53–86 is disordered; that stretch reads RADGQPPDMRQPEMRRPEMRRPEVRQPEFAETPV. Residues 62 to 80 show a composition bias toward basic and acidic residues; the sequence is RQPEMRRPEMRRPEVRQPE. Cystine bridges form between Cys96-Cys116 and Cys100-Cys112.

Belongs to the conotoxin R superfamily. As to expression, expressed by the venom duct.

It is found in the secreted. In Conus villepinii (Villepin's cone), this protein is Conotoxin vil14a.